A 109-amino-acid chain; its full sequence is Flagellar hook-basal body complex protein FliE (109 aa).

It belongs to the FliE family.

It localises to the bacterial flagellum basal body. The chain is Flagellar hook-basal body complex protein FliE from Pseudomonas syringae pv. tomato (strain ATCC BAA-871 / DC3000).